A 159-amino-acid chain; its full sequence is V-type proton ATPase 16 kDa proteolipid subunit c (159 aa).

Over 1–12 (MSSEVSSDNPIY) the chain is Lumenal. A helical membrane pass occupies residues 13-35 (GPFFGVMGAASAIIFSALGAAYG). The Cytoplasmic segment spans residues 36–57 (TAKSGTGIAAMSVMRPELIMKS). Residues 58–78 (IIPVVMAGIIAIYGLVVAVLI) traverse the membrane as a helical segment. The Lumenal portion of the chain corresponds to 79–96 (AGALEEPSKYSLYRGFIH). A helical transmembrane segment spans residues 97–118 (LGAGLAVGFSGLAAGFAIGIVG). Over 119–130 (DAGVRGTAQQPR) the chain is Cytoplasmic. A helical membrane pass occupies residues 131 to 156 (LFVGMILILIFAEVLGLYGLIVAIYL). The Lumenal portion of the chain corresponds to 157–159 (YTK).

This sequence belongs to the V-ATPase proteolipid subunit family. In terms of assembly, V-ATPase is a heteromultimeric enzyme made up of two complexes: the ATP-hydrolytic V1 complex and the proton translocation V0 complex. The V1 complex consists of three catalytic AB heterodimers that form a heterohexamer, three peripheral stalks each consisting of EG heterodimers, one central rotor including subunits D and F, and the regulatory subunits C and H. The proton translocation complex V0 consists of the proton transport subunit a, a ring of proteolipid subunits c9c'', rotary subunit d, subunits e and f, and the accessory subunits VhaAC45 and ATP6AP2. As to expression, expressed in the larval middle mid-gut; predominantly in the copper cell region with lower levels of expression in the interstitial cells.

It localises to the membrane. Its function is as follows. Proton-conducting pore forming subunit of the V0 complex of vacuolar(H+)-ATPase (V-ATPase), a multisubunit enzyme composed of a peripheral complex (V1) that hydrolyzes ATP and a membrane integral complex (V0) that translocates protons. V-ATPase is responsible for acidifying and maintaining the pH of intracellular compartments and in some cell types, is targeted to the plasma membrane, where it is responsible for acidifying the extracellular environment. In enterocytes, acts as part of a pHCl-2 sensory pathway which mediates Tor-dependent larval growth and metabolism in response to zinc availability. Likely acts in maintaining enterocyte lysosomal acidification which consequently promotes Tor activation at the lysosome membrane. The chain is V-type proton ATPase 16 kDa proteolipid subunit c (Vha16-1) from Drosophila melanogaster (Fruit fly).